The sequence spans 780 residues: Subtilisin-like protease SBT1.3 (780 aa).

The N-terminal stretch at 1 to 25 (MANKNPLQKPFLFIILSINLIFLQA) is a signal peptide. Positions 26 to 120 (ETTTQISTKK…VIPETRYELH (95 aa)) are cleaved as a propeptide — activation peptide. The Inhibitor I9 domain maps to 36-120 (TYVIHMDKSA…VIPETRYELH (85 aa)). The 513-residue stretch at 116–628 (RYELHTTRSP…AGHIDPLRAT (513 aa)) folds into the Peptidase S8 domain. Asp154 serves as the catalytic Charge relay system. Asn165 is a glycosylation site (N-linked (GlcNAc...) asparagine). His227 acts as the Charge relay system in catalysis. The PA domain maps to 384–477 (KQYPLVYLGR…GEKEGKLIKQ (94 aa)). The N-linked (GlcNAc...) asparagine glycan is linked to Asn394. The active-site Charge relay system is the Ser560. Residues Asn663 and Asn731 are each glycosylated (N-linked (GlcNAc...) asparagine).

It belongs to the peptidase S8 family.

It is found in the secreted. This chain is Subtilisin-like protease SBT1.3, found in Arabidopsis thaliana (Mouse-ear cress).